The primary structure comprises 186 residues: Large ribosomal subunit protein uL10 (186 aa).

Belongs to the universal ribosomal protein uL10 family. In terms of assembly, part of the ribosomal stalk of the 50S ribosomal subunit. The N-terminus interacts with L11 and the large rRNA to form the base of the stalk. The C-terminus forms an elongated spine to which L12 dimers bind in a sequential fashion forming a multimeric L10(L12)X complex.

Its function is as follows. Forms part of the ribosomal stalk, playing a central role in the interaction of the ribosome with GTP-bound translation factors. The polypeptide is Large ribosomal subunit protein uL10 (Rhodococcus jostii (strain RHA1)).